The sequence spans 445 residues: UPF0210 protein SP_0239 (445 aa).

This sequence belongs to the UPF0210 family. In terms of assembly, homodimer.

This is UPF0210 protein SP_0239 from Streptococcus pneumoniae serotype 4 (strain ATCC BAA-334 / TIGR4).